A 124-amino-acid polypeptide reads, in one-letter code: UPF0299 membrane protein VIBHAR_02118 (124 aa).

Transmembrane regions (helical) follow at residues 6 to 26 (LLQL…LGIG), 35 to 55 (VSVP…TLGL), 72 to 92 (MILL…MLLA), and 95 to 115 (LPII…LAWF).

It belongs to the UPF0299 family.

It localises to the cell inner membrane. This chain is UPF0299 membrane protein VIBHAR_02118, found in Vibrio campbellii (strain ATCC BAA-1116).